Here is a 591-residue protein sequence, read N- to C-terminus: V-type ATP synthase alpha chain (591 aa).

232 to 239 (GPFGAGKT) contributes to the ATP binding site.

It belongs to the ATPase alpha/beta chains family.

The enzyme catalyses ATP + H2O + 4 H(+)(in) = ADP + phosphate + 5 H(+)(out). Functionally, produces ATP from ADP in the presence of a proton gradient across the membrane. The V-type alpha chain is a catalytic subunit. In Nitrosococcus oceani (strain ATCC 19707 / BCRC 17464 / JCM 30415 / NCIMB 11848 / C-107), this protein is V-type ATP synthase alpha chain.